The primary structure comprises 392 residues: Sulfate adenylyltransferase (392 aa).

It belongs to the sulfate adenylyltransferase family.

The catalysed reaction is sulfate + ATP + H(+) = adenosine 5'-phosphosulfate + diphosphate. The protein operates within sulfur metabolism; hydrogen sulfide biosynthesis; sulfite from sulfate: step 1/3. This chain is Sulfate adenylyltransferase, found in Trichormus variabilis (strain ATCC 29413 / PCC 7937) (Anabaena variabilis).